A 415-amino-acid chain; its full sequence is 6-phospho-beta-glucosidase BglT (415 aa).

Residue 1–64 coordinates NAD(+); sequence MRIAVIGGGS…DRFKVLISDT (64 aa). Substrate contacts are provided by Arg87 and Asn140. A Mn(2+)-binding site is contributed by Cys162. Residue Asn163 coordinates substrate. His192 contributes to the Mn(2+) binding site. The active-site Proton acceptor is the Tyr241. Position 261 (Arg261) interacts with substrate.

The protein belongs to the glycosyl hydrolase 4 family. As to quaternary structure, homodimer or homotetramer. Exists in a homodimer/homotetramer equilibrium state in solution. Requires NAD(+) as cofactor. Mn(2+) serves as cofactor.

The catalysed reaction is 6-phospho-beta-D-glucosyl-(1-&gt;4)-D-glucose + H2O = D-glucose 6-phosphate + D-glucose. Its function is as follows. Hydrolyzes cellobiose 6'-phosphate into glucose 6-phosphate (Glc6P) and glucose. The chain is 6-phospho-beta-glucosidase BglT (bglT) from Thermotoga maritima (strain ATCC 43589 / DSM 3109 / JCM 10099 / NBRC 100826 / MSB8).